The sequence spans 417 residues: Serine hydroxymethyltransferase 2 (417 aa).

Residues Leu-121 and 125–127 (GHL) each bind (6S)-5,6,7,8-tetrahydrofolate. N6-(pyridoxal phosphate)lysine is present on Lys-229. Position 354–356 (354–356 (SPF)) interacts with (6S)-5,6,7,8-tetrahydrofolate.

This sequence belongs to the SHMT family. As to quaternary structure, homodimer. Pyridoxal 5'-phosphate serves as cofactor.

The protein localises to the cytoplasm. The catalysed reaction is (6R)-5,10-methylene-5,6,7,8-tetrahydrofolate + glycine + H2O = (6S)-5,6,7,8-tetrahydrofolate + L-serine. The protein operates within one-carbon metabolism; tetrahydrofolate interconversion. Its pathway is amino-acid biosynthesis; glycine biosynthesis; glycine from L-serine: step 1/1. Functionally, catalyzes the reversible interconversion of serine and glycine with tetrahydrofolate (THF) serving as the one-carbon carrier. This reaction serves as the major source of one-carbon groups required for the biosynthesis of purines, thymidylate, methionine, and other important biomolecules. Also exhibits THF-independent aldolase activity toward beta-hydroxyamino acids, producing glycine and aldehydes, via a retro-aldol mechanism. The polypeptide is Serine hydroxymethyltransferase 2 (Pseudomonas putida (strain ATCC 47054 / DSM 6125 / CFBP 8728 / NCIMB 11950 / KT2440)).